The following is a 315-amino-acid chain: tRNA dimethylallyltransferase (315 aa).

ATP is bound at residue 10–17; that stretch reads GPTASGKS. 12–17 contacts substrate; that stretch reads TASGKS. Residues 35-38 form an interaction with substrate tRNA region; the sequence is DSMQ.

Belongs to the IPP transferase family. Monomer. It depends on Mg(2+) as a cofactor.

The enzyme catalyses adenosine(37) in tRNA + dimethylallyl diphosphate = N(6)-dimethylallyladenosine(37) in tRNA + diphosphate. In terms of biological role, catalyzes the transfer of a dimethylallyl group onto the adenine at position 37 in tRNAs that read codons beginning with uridine, leading to the formation of N6-(dimethylallyl)adenosine (i(6)A). This chain is tRNA dimethylallyltransferase, found in Thermoanaerobacter pseudethanolicus (strain ATCC 33223 / 39E) (Clostridium thermohydrosulfuricum).